The sequence spans 758 residues: CRISPR system single-strand-specific deoxyribonuclease Cas10/Csm1 (subtype III-A) (758 aa).

An HD domain region spans residues 1 to 82; it reads MKKEKIDLFY…TYIADNIASG (82 aa). The 139-residue stretch at 509–647 folds into the GGDEF domain; the sequence is KRLAVVRLDV…EKDSISLFSS (139 aa).

The protein belongs to the CRISPR-associated Cas10/Csm1 family. Part of the Csm effector complex that includes at least Cas10(1), Csm2(3), Csm3(5), Csm4(1), Csm5(1) and mature crRNA. The Csm complex is elongated and slightly twisted with a maximal length of 215 Angstroms and a diameter of 75-80 Angstroms. It has been modeled to have a central protein filamant of Csm3 subunits along which the dsRNA helix of paired crRNA and target RNA binds. The filament is capped at one end by Cas10 and Csm4 and at the other end by Csm5; ssDNA is thought to bind to the N-terminal HD domain of Cas10. Csm with a precursor crRNA does not include Csm5, while Cas6, the enzyme probably involved in pre-crRNA processing, is found associated with a subset of the Csm complex. A divalent metal cation serves as cofactor.

The catalysed reaction is 6 ATP = cyclic hexaadenylate + 6 diphosphate. With respect to regulation, ssDNase activity is activated by target RNA binding to the Csm-crRNA complex and is inhibited by EDTA. Functionally, CRISPR (clustered regularly interspaced short palindromic repeat) is an adaptive immune system that provides protection against mobile genetic elements (viruses, transposable elements and conjugative plasmids). CRISPR clusters contain spacers, sequences complementary to antecedent mobile elements, and target invading nucleic acids. CRISPR clusters are transcribed and processed into CRISPR RNA (crRNA). The type III-A Csm effector complex binds crRNA and acts as a crRNA-guided RNase, DNase and cyclic oligoadenylate synthase; binding of target RNA cognate to the crRNA is required for all activities. In a heterologous host this Csm effector complex restricts ssRNA phage MS2, suggesting it may target RNA viruses in vivo. Csm functions as a non-specific ssDNase. Base-pairing between crRNA and target RNA to form a ternary Csm complex activates a ssDNase activity; target RNA cleavage suppresses the ssDNase, a temporal control that prevents uncontrolled DNA degradation. Viral RNA transcripts probably tether the Csm complex to the viral genome, recruiting Cas10 ssDNA activity which is able to degrade DNA in the transcription bubble, spatially controlling the DNase activity. Its function is as follows. This subunit has a weak ssDNase activity that is dramatically activated by the ternary Csm effector complex (the crRNA, Cas proteins and a cognate target ssRNA). Target RNA and ssDNA are cleaved simultaneously, although RNase activity (of Csm3) is much faster. RNA cleavage by Csm3 is not required for ssDNase activity as Csm complex with inactive Csm3 still has ssDNase activity; however as the cleaved target RNA products dissociate away ssDNase activity decreases. Self-recognition, with subsequent repression of the ssDNase activity, occurs when the 5' handle of the crRNA bases pairs with the 3' flanking sequence of the target RNA (which would occur if the CRISPR locus were transcribed as an anti-pre-crRNA). This protein has low activity on dsDNA which is not stimulated by the Csm complex. In terms of biological role, this subunit is a single-strand-specific deoxyribonuclease (ssDNase) which digests both linear and circular ssDNA; it has both exo- and endonuclease activity. Functionally, when associated with the ternary Csm effector complex (the crRNA, Cas proteins and a cognate target ssRNA) synthesizes cyclic oligoadenylates (cOA) from ATP, producing cyclic triadenylate (cA3) up to cyclic hexaadenylate (cA6), which is the active cOA. The enzyme is also able to cyclize pppA3 up to pppA6. cOAs are second messengers that induce an antiviral state important for defense against invading nucleic acids. Synthesis of cOA can occur with AMP plus ATP, 2'dATP or 3'dATP (but no other nucleotides), and requires a free 3'-OH ribose moiety. The polypeptide is CRISPR system single-strand-specific deoxyribonuclease Cas10/Csm1 (subtype III-A) (Streptococcus thermophilus).